The chain runs to 107 residues: Defensin-like protein 242 (107 aa).

The first 22 residues, 1–22 (MKVVAIFLASCVLFSLIPTHLS), serve as a signal peptide directing secretion. Disulfide bonds link Cys-45/Cys-100, Cys-55/Cys-84, Cys-65/Cys-94, and Cys-82/Cys-96.

It belongs to the DEFL family.

Its subcellular location is the secreted. The sequence is that of Defensin-like protein 242 (SCRL10) from Arabidopsis thaliana (Mouse-ear cress).